A 519-amino-acid polypeptide reads, in one-letter code: T-complex protein 11-like protein 2 (519 aa).

Residues 1 to 30 (MPFNGEKQCVGEDQPSDSDSSRFSESMASL) are disordered. Residue Ser16 is modified to Phosphoserine. A compositionally biased stretch (low complexity) spans 17 to 29 (DSDSSRFSESMAS).

It belongs to the TCP11 family. As to quaternary structure, interacts with FMNL2; this interaction promotes muscle-derived satellite cell (MDSC) migration and differentiation.

Its subcellular location is the cytoplasm. The protein resides in the cytoskeleton. Functionally, promotes the migration of muscle-derived satellite cells (MDSCs) during differentiation throught interaction with FMNL2 and therefore may participate in microfilament assembly. This chain is T-complex protein 11-like protein 2, found in Homo sapiens (Human).